The following is a 182-amino-acid chain: 7-carboxy-7-deazaguanine synthase (182 aa).

Residues 12-14 (LQG) and Arg-27 each bind substrate. Residues 18 to 182 (HTGTPAVFIR…LQTHKLIDIR (165 aa)) form the Radical SAM core domain. [4Fe-4S] cluster-binding residues include Cys-31, Cys-35, and Cys-38. Thr-40 is a binding site for Mg(2+). Position 68 (Thr-68) interacts with substrate. S-adenosyl-L-methionine-binding positions include Gly-70 and 111 to 113 (SPK).

The protein belongs to the radical SAM superfamily. 7-carboxy-7-deazaguanine synthase family. Homodimer. Requires [4Fe-4S] cluster as cofactor. S-adenosyl-L-methionine serves as cofactor. It depends on Mg(2+) as a cofactor.

The catalysed reaction is 6-carboxy-5,6,7,8-tetrahydropterin + H(+) = 7-carboxy-7-deazaguanine + NH4(+). It functions in the pathway purine metabolism; 7-cyano-7-deazaguanine biosynthesis. Catalyzes the complex heterocyclic radical-mediated conversion of 6-carboxy-5,6,7,8-tetrahydropterin (CPH4) to 7-carboxy-7-deazaguanine (CDG), a step common to the biosynthetic pathways of all 7-deazapurine-containing compounds. The sequence is that of 7-carboxy-7-deazaguanine synthase from Bacteroides thetaiotaomicron (strain ATCC 29148 / DSM 2079 / JCM 5827 / CCUG 10774 / NCTC 10582 / VPI-5482 / E50).